A 230-amino-acid polypeptide reads, in one-letter code: Extracellular deoxyribonuclease (230 aa).

A signal peptide spans 1-20 (MFRPLLSLCLALLVSAPAHA).

This sequence belongs to the EndA/NucM nuclease family.

The protein resides in the secreted. In Aeromonas hydrophila, this protein is Extracellular deoxyribonuclease (dns).